A 290-amino-acid polypeptide reads, in one-letter code: Glycine--tRNA ligase alpha subunit (290 aa).

It belongs to the class-II aminoacyl-tRNA synthetase family. As to quaternary structure, tetramer of two alpha and two beta subunits.

The protein localises to the cytoplasm. It catalyses the reaction tRNA(Gly) + glycine + ATP = glycyl-tRNA(Gly) + AMP + diphosphate. This chain is Glycine--tRNA ligase alpha subunit, found in Nitratiruptor sp. (strain SB155-2).